Reading from the N-terminus, the 314-residue chain is Putative thiamine biosynthesis protein HI_0357 (314 aa).

This sequence belongs to the NMT1/THI5 family.

Functionally, probably involved in thiamine biosynthesis. The chain is Putative thiamine biosynthesis protein HI_0357 from Haemophilus influenzae (strain ATCC 51907 / DSM 11121 / KW20 / Rd).